A 264-amino-acid chain; its full sequence is Protein-L-isoaspartate O-methyltransferase (264 aa).

Positions 1 to 49 (MRKPVGSKDGSGVYSRQGLDGYTPANSNTRISTATLPRPEPLRPAASSA) are disordered. Positions 24-35 (PANSNTRISTAT) are enriched in polar residues. Residue Ser-112 is part of the active site.

Belongs to the methyltransferase superfamily. L-isoaspartyl/D-aspartyl protein methyltransferase family.

It localises to the cytoplasm. The catalysed reaction is [protein]-L-isoaspartate + S-adenosyl-L-methionine = [protein]-L-isoaspartate alpha-methyl ester + S-adenosyl-L-homocysteine. Its function is as follows. Catalyzes the methyl esterification of L-isoaspartyl residues in peptides and proteins that result from spontaneous decomposition of normal L-aspartyl and L-asparaginyl residues. It plays a role in the repair and/or degradation of damaged proteins. The protein is Protein-L-isoaspartate O-methyltransferase of Bordetella avium (strain 197N).